The chain runs to 436 residues: tRNA (guanine(37)-N(1))-methyltransferase 1 (436 aa).

S-adenosyl-L-methionine is bound by residues His-229, 277–278 (DL), and Asn-325.

Belongs to the class I-like SAM-binding methyltransferase superfamily. TRM5/TYW2 family. Monomer.

It localises to the mitochondrion matrix. It is found in the nucleus. Its subcellular location is the cytoplasm. The enzyme catalyses guanosine(37) in tRNA + S-adenosyl-L-methionine = N(1)-methylguanosine(37) in tRNA + S-adenosyl-L-homocysteine + H(+). In terms of biological role, specifically methylates the N1 position of guanosine-37 in various cytoplasmic and mitochondrial tRNAs. Methylation is not dependent on the nature of the nucleoside 5' of the target nucleoside. This is the first step in the biosynthesis of wybutosine (yW), a modified base adjacent to the anticodon of tRNAs and required for accurate decoding. In Phaeodactylum tricornutum (strain CCAP 1055/1), this protein is tRNA (guanine(37)-N(1))-methyltransferase 1.